Reading from the N-terminus, the 152-residue chain is SsrA-binding protein (152 aa).

It belongs to the SmpB family.

The protein localises to the cytoplasm. Its function is as follows. Required for rescue of stalled ribosomes mediated by trans-translation. Binds to transfer-messenger RNA (tmRNA), required for stable association of tmRNA with ribosomes. tmRNA and SmpB together mimic tRNA shape, replacing the anticodon stem-loop with SmpB. tmRNA is encoded by the ssrA gene; the 2 termini fold to resemble tRNA(Ala) and it encodes a 'tag peptide', a short internal open reading frame. During trans-translation Ala-aminoacylated tmRNA acts like a tRNA, entering the A-site of stalled ribosomes, displacing the stalled mRNA. The ribosome then switches to translate the ORF on the tmRNA; the nascent peptide is terminated with the 'tag peptide' encoded by the tmRNA and targeted for degradation. The ribosome is freed to recommence translation, which seems to be the essential function of trans-translation. The sequence is that of SsrA-binding protein from Persephonella marina (strain DSM 14350 / EX-H1).